The primary structure comprises 815 residues: Sodium/hydrogen exchanger 1 (815 aa).

The Extracellular segment spans residues 1–98 (MVLRSGICGL…FPVLGIDYTH (98 aa)). Threonine 42 carries O-linked (GalNAc...) threonine glycosylation. A disordered region spans residues 42–79 (TASTIRSSEPPRERSIGDVTTAPPEVTPESRPVNHSVT). Residue serine 56 is glycosylated (O-linked (GalNAc...) serine). Threonine 61, threonine 62, and threonine 68 each carry an O-linked (GalNAc...) threonine glycan. The N-linked (GlcNAc...) asparagine glycan is linked to asparagine 75. Residues 99-121 (VRTPFEISLWILLACLMKIGFHV) form a helical membrane-spanning segment. Topologically, residues 122 to 130 (IPTISSIVP) are cytoplasmic. Residues 131 to 148 (ESCLLIVVGLLVGGLIKG) form a helical membrane-spanning segment. Topologically, residues 149 to 158 (VGETPPFLQS) are extracellular. Residues 159–176 (DVFFLFLLPPIILDAGYF) traverse the membrane as a helical segment. Over 177-186 (LPLRQFTENL) the chain is Cytoplasmic. A helical transmembrane segment spans residues 187–215 (GTILIFAVVGTLWNAFFLGGLMYAVCLVG). Residues 216 to 222 (GEQINNI) lie on the Extracellular side of the membrane. Residues 223 to 249 (GLLDNLLFGSIISAVDPVAVLAVFEEI) form a helical membrane-spanning segment. Residues 250–252 (HIN) lie on the Cytoplasmic side of the membrane. A helical membrane pass occupies residues 253–283 (ELLHILVFGESLLNDAVTVVLYHLFEEFANY). Residues 284 to 287 (EHVG) are Extracellular-facing. The helical transmembrane segment at 288–322 (IVDIFLGFLSFFVVALGGVLVGVVYGVIAAFTSRF) threads the bilayer. At 323-328 (TSHIRV) the chain is on the cytoplasmic side. A helical membrane pass occupies residues 329–341 (IEPLFVFLYSYMA). Topologically, residues 342-350 (YLSAELFHL) are extracellular. Residues 351 to 371 (SGIMALIASGVVMRPYVEANI) form a helical membrane-spanning segment. Residues 372 to 373 (SH) are Cytoplasmic-facing. The helical transmembrane segment at 374 to 404 (KSHTTIKYFLKMWSSVSETLIFIFLGVSTVA) threads the bilayer. The Extracellular segment spans residues 405 to 410 (GSHHWN). A helical transmembrane segment spans residues 411-438 (WTFVISTLLFCLIARVLGVLGLTWFINK). Residues 439-444 (FRIVKL) are Cytoplasmic-facing. A helical membrane pass occupies residues 445–469 (TPKDQFIIAYGGLRGAIAFSLGYLL). The Extracellular segment spans residues 470–475 (DKKHFP). The chain crosses the membrane as a helical span at residues 476–505 (MCDLFLTAIITVIFFTVFVQGMTIRPLVDL). Positions 503-545 (VDLLAVKKKQETKRSINEEIHTQFLDHLLTGIEDICGHYGHHH) are interaction with TESC. Residues 506-815 (LAVKKKQETK…EGEPFFPKGQ (310 aa)) lie on the Cytoplasmic side of the membrane. The segment at 509–516 (KKKQETKR) is PI(4,5)P2-binding region. The segment at 515–545 (KRSINEEIHTQFLDHLLTGIEDICGHYGHHH) is interaction with CHP2. A confers pH-dependent PI(4,5)P2 binding region spans residues 540-545 (HYGHHH). Residues 552–560 (RFNKKYVKK) form a PI(4,5)P2-binding region region. A phosphoserine mark is found at serine 599 and serine 602. At threonine 603 the chain carries Phosphothreonine. Residues serine 605 and serine 648 each carry the phosphoserine modification. The interval 633 to 815 (KILRNNLQKT…EGEPFFPKGQ (183 aa)) is interaction with TESC. Residues 633-815 (KILRNNLQKT…EGEPFFPKGQ (183 aa)) are interaction with CALM1. The segment at 684–687 (LTVP) is interaction with PPP3CA. Residues serine 693, serine 697, and serine 703 each carry the phosphoserine modification. An interaction with PPP3CA region spans residues 715–720 (PVITID). Serine 723, serine 726, and serine 729 each carry phosphoserine. Residues 744–815 (LSRDPAKVAE…EGEPFFPKGQ (72 aa)) form a disordered region. A Phosphothreonine modification is found at threonine 779. A compositionally biased stretch (polar residues) spans 782–791 (PSDSPSSQRI). A phosphoserine mark is found at serine 785, serine 787, and serine 796.

Belongs to the monovalent cation:proton antiporter 1 (CPA1) transporter (TC 2.A.36) family. In terms of assembly, homodimer; dimerization is crucial for its function. Oligomer. Interacts with CALM1 in a calcium-dependent manner. Interacts with TESC. Interacts (via the C-terminal domain) with CHP1; the interaction occurs at the plasma membrane in a calcium-dependent manner and facilitates the maturation, cell surface expression, and function of SLC9A3. Interacts with CHP2; the interaction occurs in a calcium-dependent manner. Interacts with EZR; regulates the cytoskeletal interactions of SLC9A1 and promotes stress fiber formation. O-glycosylated. Post-translationally, ubiquitinated, leading to its degradation by the proteasome. Ubiquitination is reduced by CHP1. In terms of processing, phosphorylation at Thr-779 increases SLC9A1 activity. Specifically dephosphorylated at Thr-779 by PPP3CA that negatively regulates SLC9A1 activity. Phosphorylation at Ser-648 by AKT1 reduces SLC9A1 binding to CALM1. Palmitoylated; may play a major role in SLC9A1 regulation. Kidney and intestine.

The protein localises to the cell membrane. It localises to the basolateral cell membrane. The enzyme catalyses Na(+)(in) + H(+)(out) = Na(+)(out) + H(+)(in). The catalysed reaction is Li(+)(out) + H(+)(in) = Li(+)(in) + H(+)(out). It catalyses the reaction Li(+)(in) + Na(+)(out) = Li(+)(out) + Na(+)(in). With respect to regulation, activated at acidic pHs. Inhibited by amiloride and 5-amino-substituted derivatives. Inhibited by cariporide and eniporide. Phosphatidylinositol 4,5-bisphosphate (PI(4,5)P2) and phosphatidylinositol 3,4,5-trisphosphate (PI(3,4,5)P3) bind and differentially regulate SLC9A1 activity. Its function is as follows. Electroneutral Na(+) /H(+) antiporter that extrudes Na(+) in exchange for external protons driven by the inward sodium ion chemical gradient, protecting cells from acidification that occurs from metabolism. Exchanges intracellular H(+) ions for extracellular Na(+) in 1:1 stoichiometry. Plays a key role in maintening intracellular pH neutral and cell volume, and thus is important for cell growth, proliferation, migration and survival. In addition, can transport lithium Li(+) and also functions as a Na(+)/Li(+) antiporter. SLC9A1 also functions in membrane anchoring and organization of scaffolding complexes that coordinate signaling inputs. This is Sodium/hydrogen exchanger 1 from Homo sapiens (Human).